Here is a 44-residue protein sequence, read N- to C-terminus: Small ribosomal subunit protein eS7 (44 aa).

A compositionally biased stretch (basic residues) spans 18–34; the sequence is KPTRKSRIKNKQKRPRS. Positions 18-44 are disordered; it reads KPTRKSRIKNKQKRPRSRTLTAVHDAI.

It belongs to the eukaryotic ribosomal protein eS7 family. Component of the small ribosomal subunit.

It localises to the cytoplasm. Its subcellular location is the cytoskeleton. The protein localises to the microtubule organizing center. The protein resides in the centrosome. It is found in the nucleus. Functionally, component of the small ribosomal subunit. The ribosome is a large ribonucleoprotein complex responsible for the synthesis of proteins in the cell. Required for rRNA maturation. The sequence is that of Small ribosomal subunit protein eS7 (rps7) from Salmo salar (Atlantic salmon).